The following is a 1058-amino-acid chain: Probable plasma membrane ATPase (1058 aa).

A compositionally biased stretch (polar residues) spans Met1–Ser29. The disordered stretch occupies residues Met1–Tyr123. Topologically, residues Met1–Phe212 are cytoplasmic. Residues Val31 to Gln40 are compositionally biased toward basic and acidic residues. Low complexity predominate over residues Gln41–Gln66. Positions Ser96–Ala111 are enriched in polar residues. The helical transmembrane segment at Leu213–Ile232 threads the bilayer. The Extracellular portion of the chain corresponds to Ala233–Trp237. Residues Val238–Glu258 traverse the membrane as a helical segment. Residues Asn259–Ile387 are Cytoplasmic-facing. A helical membrane pass occupies residues Gly388–Phe407. The Extracellular portion of the chain corresponds to Leu408 to Leu425. A helical membrane pass occupies residues Asn426 to Thr447. At Met448–Arg783 the chain is on the cytoplasmic side. Residue Asp480 is the 4-aspartylphosphate intermediate of the active site. Residues Asp728 and Asp732 each coordinate Mg(2+). A helical transmembrane segment spans residues Asn784 to Val805. Over Ala806–Lys810 the chain is Extracellular. Residues Phe811–Asp833 form a helical membrane-spanning segment. The Cytoplasmic segment spans residues Arg834–Val849. A helical transmembrane segment spans residues Phe850–Ile870. Residues Ile871 to Asn889 lie on the Extracellular side of the membrane. The chain crosses the membrane as a helical span at residues Glu890–Ser910. At Arg911–Gly922 the chain is on the cytoplasmic side. Residues Asn923–Gly943 form a helical membrane-spanning segment. Topologically, residues Phe944–Gly967 are extracellular. The chain crosses the membrane as a helical span at residues Cys968–Asp988. Topologically, residues Phe989 to Val1058 are cytoplasmic.

It belongs to the cation transport ATPase (P-type) (TC 3.A.3) family. Type IIIA subfamily.

The protein localises to the cell membrane. It catalyses the reaction ATP + H2O + H(+)(in) = ADP + phosphate + 2 H(+)(out). With respect to regulation, acid pH levels increase its ATPase activity. Functionally, P-type plasma membrane H+-ATPase (proton pump). The proton gradient it generates drives the active transport of nutrients by H(+) symport. The resulting external acidification and/or internal alkinization may mediate growth responses. The sequence is that of Probable plasma membrane ATPase (patB) from Dictyostelium discoideum (Social amoeba).